We begin with the raw amino-acid sequence, 1101 residues long: Nuclear pore complex protein NUP107 (1101 aa).

The protein belongs to the nucleoporin Nup84/Nup107 family. Part of the nuclear pore complex (NPC). The NPC has an eight-fold symmetrical structure comprising a central transport channel and two rings, the cytoplasmic and nuclear rings, to which eight filaments are attached. The cytoplasmic filaments have loose ends, while the nuclear filaments are joined in a distal ring, forming a nuclear basket. NPCs are highly dynamic in configuration and composition, and can be devided in 3 subcomplexes, the NUP62 subcomplex, the NUP107-160 subcomplex and the NUP93 subcomplex, containing approximately 30 different nucleoporin proteins.

It localises to the nucleus envelope. Its subcellular location is the nucleus. It is found in the nuclear pore complex. This is Nuclear pore complex protein NUP107 from Arabidopsis thaliana (Mouse-ear cress).